A 513-amino-acid chain; its full sequence is Bifunctional purine biosynthesis protein PurH (513 aa).

The region spanning 1-144 (MSKRALISVS…KNHERVGIVV (144 aa)) is the MGS-like domain.

This sequence belongs to the PurH family.

The catalysed reaction is (6R)-10-formyltetrahydrofolate + 5-amino-1-(5-phospho-beta-D-ribosyl)imidazole-4-carboxamide = 5-formamido-1-(5-phospho-D-ribosyl)imidazole-4-carboxamide + (6S)-5,6,7,8-tetrahydrofolate. It catalyses the reaction IMP + H2O = 5-formamido-1-(5-phospho-D-ribosyl)imidazole-4-carboxamide. Its pathway is purine metabolism; IMP biosynthesis via de novo pathway; 5-formamido-1-(5-phospho-D-ribosyl)imidazole-4-carboxamide from 5-amino-1-(5-phospho-D-ribosyl)imidazole-4-carboxamide (10-formyl THF route): step 1/1. The protein operates within purine metabolism; IMP biosynthesis via de novo pathway; IMP from 5-formamido-1-(5-phospho-D-ribosyl)imidazole-4-carboxamide: step 1/1. The protein is Bifunctional purine biosynthesis protein PurH of Moorella thermoacetica (strain ATCC 39073 / JCM 9320).